Reading from the N-terminus, the 359-residue chain is Methyltransferase fsa4 (359 aa).

S-adenosyl-L-methionine contacts are provided by residues 198 to 199 (GG), Asp224, 248 to 249 (SF), Arg264, and Arg265.

Belongs to the class I-like SAM-binding methyltransferase superfamily. Cation-independent O-methyltransferase family.

Its pathway is mycotoxin biosynthesis. Functionally, methyltransferase; part of the gene cluster that mediates the biosynthesis of HIV-1 integrase inhibitor equisetin and of fusarisetin A, both trans-fused decalin-containing tetramic acids showing also antimicrobial activity. The PKS module of fsa1 together with the enoylreductase fsa3 catalyze the formation of the polyketide unit which is then conjugated to L-serine by the condensation domain of the fsa1 NRPS module. Activity of the Dieckmann cyclase domain (RED) results in release of the Dieckmann product intermediate. Diels-Alderase fsa2 is involved in endo-selective Diels-Alder cycloaddition to form the decalin ring, leading to the production of N-desmethylequisetin also called trichosetin. Subsequent N-methylation is carried out by fsa4 to give equisetin. The enzymatic gene responsible for the conversion of equisetin to fusarisetin A has not been identified yet and is probably located outside of the fsa cluster. The protein is Methyltransferase fsa4 of Fusarium sp. (strain FN080326).